The chain runs to 242 residues: Biosynthetic peptidoglycan transglycosylase (242 aa).

A helical membrane pass occupies residues 19 to 39 (LMVVLAIFWGGGIALFSVAPV).

Belongs to the glycosyltransferase 51 family.

The protein resides in the cell inner membrane. It carries out the reaction [GlcNAc-(1-&gt;4)-Mur2Ac(oyl-L-Ala-gamma-D-Glu-L-Lys-D-Ala-D-Ala)](n)-di-trans,octa-cis-undecaprenyl diphosphate + beta-D-GlcNAc-(1-&gt;4)-Mur2Ac(oyl-L-Ala-gamma-D-Glu-L-Lys-D-Ala-D-Ala)-di-trans,octa-cis-undecaprenyl diphosphate = [GlcNAc-(1-&gt;4)-Mur2Ac(oyl-L-Ala-gamma-D-Glu-L-Lys-D-Ala-D-Ala)](n+1)-di-trans,octa-cis-undecaprenyl diphosphate + di-trans,octa-cis-undecaprenyl diphosphate + H(+). It functions in the pathway cell wall biogenesis; peptidoglycan biosynthesis. Peptidoglycan polymerase that catalyzes glycan chain elongation from lipid-linked precursors. The sequence is that of Biosynthetic peptidoglycan transglycosylase from Escherichia coli O81 (strain ED1a).